The primary structure comprises 87 residues: Small ribosomal subunit protein bS20 (87 aa).

Residues 1–29 (MANTAQARKRARQAVKQNAHNSSQRSTLR) form a disordered region. Positions 20–29 (HNSSQRSTLR) are enriched in polar residues.

The protein belongs to the bacterial ribosomal protein bS20 family.

In terms of biological role, binds directly to 16S ribosomal RNA. The chain is Small ribosomal subunit protein bS20 from Herminiimonas arsenicoxydans.